The following is a 285-amino-acid chain: NADH-cytochrome b5 reductase 1 (285 aa).

Residues 7-23 traverse the membrane as a helical segment; that stretch reads LATFSVLVLFYKLFTYS. One can recognise an FAD-binding FR-type domain in the interval 40-144; the sequence is TEFREFELVE…SGPRGFYEYV (105 aa). FAD is bound by residues 124–139 and 150–182; these read GDMK…GPRG and HLAM…RVTL.

The protein belongs to the flavoprotein pyridine nucleotide cytochrome reductase family. As to quaternary structure, monomer. Component of the 2-(3-amino-3-carboxypropyl)histidine synthase complex composed of DPH1, DPH2, DPH3 and a NADH-dependent reductase, predominantly CBR1. FAD is required as a cofactor.

It localises to the mitochondrion outer membrane. The enzyme catalyses 2 Fe(III)-[cytochrome b5] + NADH = 2 Fe(II)-[cytochrome b5] + NAD(+) + H(+). The catalysed reaction is 2 Fe(3+)-[Dph3] + NADH = 2 Fe(2+)-[Dph3] + NAD(+) + H(+). Its pathway is protein modification; peptidyl-diphthamide biosynthesis. In terms of biological role, NADH-dependent reductase for DPH3 and cytochrome b5. Required for the first step of diphthamide biosynthesis, a post-translational modification of histidine which occurs in elongation factor 2. DPH1 and DPH2 transfer a 3-amino-3-carboxypropyl (ACP) group from S-adenosyl-L-methionine (SAM) to a histidine residue, the reaction is assisted by a reduction system comprising DPH3 and a NADH-dependent reductase, predominantly CBR1. By reducing DPH3, also involved in the formation of the tRNA wobble base modification mcm5s 2U (5-methoxycarbonylmethyl-2-thiouridine), mediated by the elongator complex. The cytochrome b5/NADH cytochrome b5 reductase electron transfer system supports the catalytic activity of several sterol biosynthetic enzymes. In Candida glabrata (strain ATCC 2001 / BCRC 20586 / JCM 3761 / NBRC 0622 / NRRL Y-65 / CBS 138) (Yeast), this protein is NADH-cytochrome b5 reductase 1 (CBR1).